The sequence spans 1175 residues: Beta-agarase AgaO (1175 aa).

Residues Met1 to Ala29 form the signal peptide. Residues Tyr32–Ala164 enclose the CBM6 1 domain. A disordered region spans residues Ser169 to Ser208. Over residues Thr178–Ser200 the composition is skewed to low complexity. The CBM6 2 domain maps to Phe211–Glu339. The disordered stretch occupies residues Ile355–Ala481. Residues Asp382–Asp393 are compositionally biased toward basic and acidic residues. Polar residues predominate over residues Asn471–Ala481. Catalysis depends on Glu661, which acts as the Proton donor. Glu832 serves as the catalytic Nucleophile.

This sequence belongs to the glycosyl hydrolase 86 family.

The enzyme catalyses Hydrolysis of (1-&gt;4)-beta-D-galactosidic linkages in agarose, giving the tetramer as the predominant product.. Its activity is regulated as follows. Activity and stability are strongly enhanced by CaCl(2). Activity is not affected by sulfhydryl inhibitors such as iodoacetoamide and p-chloromercuribenzoate or by thiol reagents such as dithiothreitol and 2-mercaptoethanol. Strongly inhibited by N-bromosuccinimide and sodium dodecyl sulfate. Endo-type beta-agarase, which degrades agarose and agarose oligosaccharides more polymerized than hexamers to yield neoagarohexaose (NA6) as the main product, with lesser amounts of neoagarotetraose (NA4) and neoagarobiose (NA2). The sequence is that of Beta-agarase AgaO from Microbulbifer thermotolerans.